The primary structure comprises 419 residues: Serine hydroxymethyltransferase (419 aa).

Residues L118 and 122–124 contribute to the (6S)-5,6,7,8-tetrahydrofolate site; that span reads GHL. Residue K227 is modified to N6-(pyridoxal phosphate)lysine.

This sequence belongs to the SHMT family. In terms of assembly, homodimer. The cofactor is pyridoxal 5'-phosphate.

It localises to the cytoplasm. It catalyses the reaction (6R)-5,10-methylene-5,6,7,8-tetrahydrofolate + glycine + H2O = (6S)-5,6,7,8-tetrahydrofolate + L-serine. It functions in the pathway one-carbon metabolism; tetrahydrofolate interconversion. The protein operates within amino-acid biosynthesis; glycine biosynthesis; glycine from L-serine: step 1/1. Its function is as follows. Catalyzes the reversible interconversion of serine and glycine with tetrahydrofolate (THF) serving as the one-carbon carrier. This reaction serves as the major source of one-carbon groups required for the biosynthesis of purines, thymidylate, methionine, and other important biomolecules. Also exhibits THF-independent aldolase activity toward beta-hydroxyamino acids, producing glycine and aldehydes, via a retro-aldol mechanism. This chain is Serine hydroxymethyltransferase, found in Chloroflexus aurantiacus (strain ATCC 29364 / DSM 637 / Y-400-fl).